The chain runs to 252 residues: MSQHQKIYPVQDPEAATARPTAPLVPRGSSRSEHGDPSKVPLNQRPQRFVPLAPPKKRRSCCCRCFCYTFCFLLLLVVAVGASIGILYLVFKPKLPDYSIDRLQLTRFALNQDSSLTTAFNVTITAKNPNEKIGIYYEDGSKITVWYMEHQLSNGSLPKFYQGHENTTVIYVEMTGQTQNASGLRTTLEEQQQRTGNIPLRIRVNQPVRVKFGKLKLFEVRFLVRCGVFVDSLATNNVIKIQSSSCKFRLRL.

The interval 1 to 46 is disordered; that stretch reads MSQHQKIYPVQDPEAATARPTAPLVPRGSSRSEHGDPSKVPLNQRP. A helical transmembrane segment spans residues 70 to 90; it reads FCFLLLLVVAVGASIGILYLV. 4 N-linked (GlcNAc...) asparagine glycosylation sites follow: N121, N154, N166, and N180.

In terms of assembly, homodimer. In terms of tissue distribution, highly expressed in seeds and at lower level in roots and senescing leaves. Expressed in leaves and flowers.

The protein localises to the cell membrane. The protein resides in the cytoplasm. It is found in the cytosol. Its function is as follows. Plays an important role in the abiotic stresses-induced abscisic acid (ABA) signaling and biosynthesis. Acts as a positive regulator of ABA-mediated seed germination inhibition. Functions downstream of ABF2/AREB1, ABF4/AREB2 and ABF3. This chain is NDR1/HIN1-like protein 6, found in Arabidopsis thaliana (Mouse-ear cress).